The primary structure comprises 453 residues: V-type proton ATPase subunit B (453 aa).

Arg-341 is an ATP binding site.

It belongs to the ATPase alpha/beta chains family. V-ATPase is a heteromultimeric enzyme made up of two complexes: the ATP-hydrolytic V1 complex and the proton translocation V0 complex. The V1 complex consists of three catalytic AB heterodimers that form a heterohexamer, three peripheral stalks each consisting of EG heterodimers, one central rotor including subunits D and F, and the regulatory subunits C and H. The proton translocation complex V0 consists of the proton transport subunit a, a ring of proteolipid subunits c9c'', rotary subunit d, subunits e and f, and two accessory subunits.

Functionally, non-catalytic subunit of the V1 complex of vacuolar(H+)-ATPase (V-ATPase), a multisubunit enzyme composed of a peripheral complex (V1) that hydrolyzes ATP and a membrane integral complex (V0) that translocates protons. V-ATPase is responsible for acidifying and maintaining the pH of intracellular compartments and in some cell types, is targeted to the plasma membrane, where it is responsible for acidifying the extracellular environment. Essential for the proper assembly and activity of V-ATPase. This Gallus gallus (Chicken) protein is V-type proton ATPase subunit B (ATP6V1B).